The chain runs to 306 residues: Proteasome subunit beta (306 aa).

A propeptide spans 1–67 (removed in mature form; by autocatalysis); that stretch reads MTWPNRDQPA…GLPTDAVPHG (67 aa). T68 serves as the catalytic Nucleophile.

The protein belongs to the peptidase T1B family. As to quaternary structure, the 20S proteasome core is composed of 14 alpha and 14 beta subunits that assemble into four stacked heptameric rings, resulting in a barrel-shaped structure. The two inner rings, each composed of seven catalytic beta subunits, are sandwiched by two outer rings, each composed of seven alpha subunits. The catalytic chamber with the active sites is on the inside of the barrel. Has a gated structure, the ends of the cylinder being occluded by the N-termini of the alpha-subunits. Is capped by the proteasome-associated ATPase, ARC.

It localises to the cytoplasm. It carries out the reaction Cleavage of peptide bonds with very broad specificity.. It functions in the pathway protein degradation; proteasomal Pup-dependent pathway. With respect to regulation, the formation of the proteasomal ATPase ARC-20S proteasome complex, likely via the docking of the C-termini of ARC into the intersubunit pockets in the alpha-rings, may trigger opening of the gate for substrate entry. Interconversion between the open-gate and close-gate conformations leads to a dynamic regulation of the 20S proteasome proteolysis activity. Its function is as follows. Component of the proteasome core, a large protease complex with broad specificity involved in protein degradation. This is Proteasome subunit beta from Mycolicibacterium vanbaalenii (strain DSM 7251 / JCM 13017 / BCRC 16820 / KCTC 9966 / NRRL B-24157 / PYR-1) (Mycobacterium vanbaalenii).